The chain runs to 288 residues: Fibroblast growth factor 2 (288 aa).

Residues 1 to 142 (MVGVGGGDVE…TMAAGSITTL (142 aa)) constitute a propeptide that is removed on maturation. A disordered region spans residues 1 to 156 (MVGVGGGDVE…EDGGSGAFPP (156 aa)). The segment covering 72 to 84 (ERPSGSRLGDHGR) has biased composition (basic and acidic residues). An omega-N-methylarginine; alternate mark is found at Arg-108, Arg-110, and Arg-112. 3 positions are modified to symmetric dimethylarginine; alternate: Arg-108, Arg-110, and Arg-112. Over residues 113–132 (GTAAPRAAPAARGSRPGPAG) the composition is skewed to low complexity. Residue Asn-169 coordinates heparin. Positions 179 to 181 (DGR) match the Cell attachment site; atypical motif. Position 215 is a phosphotyrosine; by TEC (Tyr-215). A Cell attachment site; atypical motif is present at residues 221 to 223 (DGR). Lys-228 is covalently cross-linked (Glycyl lysine isopeptide (Lys-Gly) (interchain with G-Cter in SUMO1)). A heparin-binding region spans residues 261-277 (KRTGQYKLGSKTGPGQK).

It belongs to the heparin-binding growth factors family. As to quaternary structure, monomer. Homodimer. Interacts with FGFR1, FGFR2, FGFR3 and FGFR4. Affinity between fibroblast growth factors (FGFs) and their receptors is increased by heparan sulfate glycosaminoglycans that function as coreceptors. Interacts with CSPG4, FGFBP1 and TEC. Found in a complex with FGFBP1, FGF1 and FGF2. Interacts with FGFBP3. Interacts with integrin ITGAV:ITGB3; the interaction is required for FGF2 signaling. Interacts with SNORC (via the extracellular domain). Interacts with glypican GPC3. Post-translationally, phosphorylation at Tyr-215 regulates FGF2 unconventional secretion.

It is found in the secreted. The protein localises to the nucleus. In terms of biological role, acts as a ligand for FGFR1, FGFR2, FGFR3 and FGFR4. Also acts as an integrin ligand which is required for FGF2 signaling. Binds to integrin ITGAV:ITGB3. Plays an important role in the regulation of cell survival, cell division, cell differentiation and cell migration. Functions as a potent mitogen in vitro. Can induce angiogenesis. Mediates phosphorylation of ERK1/2 and thereby promotes retinal lens fiber differentiation. The polypeptide is Fibroblast growth factor 2 (Pan troglodytes (Chimpanzee)).